An 841-amino-acid chain; its full sequence is Axin-1 (841 aa).

Residues 1-78 form a disordered region; sequence MNIQGKGFPL…GYEPEGSASP (78 aa). A compositionally biased stretch (polar residues) spans 44 to 61; it reads FYSSKSDAVRNETSTATP. In terms of domain architecture, RGS spans 88-211; sequence SLHSLLDDQD…LKSDIYLEYT (124 aa). A disordered region spans residues 217–269; the sequence is SPKIYSDPSSGSGTGKGLPGYLPTLNEDEEWKCDQDTEPEASRDSAPSSRLTQ. Residues 248–259 are compositionally biased toward basic and acidic residues; it reads KCDQDTEPEASR. The segment at 348–433 is interaction with GSK3B; sequence LRKQHRREMQ…DADISSGPSV (86 aa). Positions 434-508 are interaction with beta-catenin; the sequence is ISHKMPSAQP…RSPESGHLGK (75 aa). Disordered stretches follow at residues 482-527, 613-635, and 727-756; these read KTPG…TTKS, NIKK…SPED, and RRLE…SGAS. The segment covering 727–736 has biased composition (basic and acidic residues); sequence RRLEEEEKRA. In terms of domain architecture, DIX spans 759–841; that stretch reads CENIVVAYYF…KIIGKVEKID (83 aa).

In terms of assembly, homodimer. Post-translationally, ADP-ribosylated by tankyrase TNKS and TNKS2. Poly-ADP-ribosylated protein is recognized by RNF146, followed by ubiquitination at 'Lys-48' and subsequent activation of the Wnt signaling pathway. Ubiquitinated by RNF146 when poly-ADP-ribosylated, leading to its degradation and subsequent activation of the Wnt signaling pathway.

The protein resides in the cytoplasm. Its subcellular location is the nucleus. The protein localises to the membrane. It localises to the cell membrane. Its function is as follows. Component of the beta-catenin destruction complex required for regulating CTNNB1 levels through phosphorylation and ubiquitination, and modulating Wnt-signaling. Controls dorsoventral patterning via two opposing effects; down-regulates CTNNB1 to inhibit the Wnt signaling pathway and ventralize embryos, but also dorsalizes embryos by activating a Wnt-independent JNK signaling pathway. The chain is Axin-1 (AXIN1) from Gallus gallus (Chicken).